The sequence spans 214 residues: Cytochrome b (214 aa).

4 consecutive transmembrane segments (helical) span residues 31-51 (FGSMLLICLMIQTTTGFFLAI), 75-96 (WIMQNTHAIGASLFFICIYTHI), 111-131 (WLSGTTLLIILMATAFFGYVL), and 176-196 (FFALHFILPFAIISLSSIHIL). Residues His81 and His95 each contribute to the heme b site. Positions 180 and 194 each coordinate heme b. His199 serves as a coordination point for a ubiquinone.

Belongs to the cytochrome b family. As to quaternary structure, the cytochrome bc1 complex contains 3 respiratory subunits (MT-CYB, CYC1 and UQCRFS1), 2 core proteins (UQCRC1 and UQCRC2) and probably 6 low-molecular weight proteins. Heme b serves as cofactor.

Its subcellular location is the mitochondrion inner membrane. Functionally, component of the ubiquinol-cytochrome c reductase complex (complex III or cytochrome b-c1 complex) that is part of the mitochondrial respiratory chain. The b-c1 complex mediates electron transfer from ubiquinol to cytochrome c. Contributes to the generation of a proton gradient across the mitochondrial membrane that is then used for ATP synthesis. This chain is Cytochrome b (MT-CYB), found in Lachesis muta muta (Bushmaster).